The primary structure comprises 140 residues: FLYWCH family member 2 (140 aa).

2 disordered regions span residues 1 to 39 (MPLPEPSEQEGESVKAGQEPSSKPGTEVVPAAPRKPREF) and 83 to 140 (THPE…GKSL). Serine 21 is modified (phosphoserine). Residues 98 to 114 (PEQKRSRQDPGADRTED) show a composition bias toward basic and acidic residues. Residues 118 to 127 (AAGPPEAAGE) show a composition bias toward low complexity.

The chain is FLYWCH family member 2 (FLYWCH2) from Pongo abelii (Sumatran orangutan).